Reading from the N-terminus, the 175-residue chain is Small ribosomal subunit protein uS5 (175 aa).

In terms of domain architecture, S5 DRBM spans 11 to 74; sequence LSEVLVDVNR…QAAKKRMMKV (64 aa).

The protein belongs to the universal ribosomal protein uS5 family. Part of the 30S ribosomal subunit. Contacts proteins S4 and S8.

Its function is as follows. With S4 and S12 plays an important role in translational accuracy. In terms of biological role, located at the back of the 30S subunit body where it stabilizes the conformation of the head with respect to the body. The polypeptide is Small ribosomal subunit protein uS5 (Rickettsia prowazekii (strain Madrid E)).